Consider the following 197-residue polypeptide: MAASPKINRREHILQCLATMLETNPGQRITTAKLAAEVGVSEAALYRHFPSKARMFEGLIDFIEESLLSRINLIMDEEKDTMKRCQHLLQLLLIFAERNPGISRLLNGDALLGEHDRLRSRIGQIFSKIETHLKQILREKTLREGKGFNLDEAILANLLLAVAEGRISQFVRSEFKQKPTTHFEEQWVFIQQQLLQS.

Residues 7-67 form the HTH tetR-type domain; the sequence is INRREHILQC…GLIDFIEESL (61 aa). The segment at residues 30-49 is a DNA-binding region (H-T-H motif); that stretch reads TTAKLAAEVGVSEAALYRHF.

This sequence belongs to the nucleoid occlusion factor SlmA family. Homodimer. Interacts with FtsZ.

Its subcellular location is the cytoplasm. It is found in the nucleoid. Required for nucleoid occlusion (NO) phenomenon, which prevents Z-ring formation and cell division over the nucleoid. Acts as a DNA-associated cell division inhibitor that binds simultaneously chromosomal DNA and FtsZ, and disrupts the assembly of FtsZ polymers. SlmA-DNA-binding sequences (SBS) are dispersed on non-Ter regions of the chromosome, preventing FtsZ polymerization at these regions. The polypeptide is Nucleoid occlusion factor SlmA (Shewanella woodyi (strain ATCC 51908 / MS32)).